Reading from the N-terminus, the 202-residue chain is uncharacterized protein (202 aa).

Residue lysine 136 forms an Isoglutamyl lysine isopeptide (Lys-Gln) (interchain with Q-Cter in protein Pup) linkage.

This is an uncharacterized protein from Mycobacterium tuberculosis (strain ATCC 25618 / H37Rv).